A 196-amino-acid polypeptide reads, in one-letter code: Phosphoheptose isomerase (196 aa).

The 166-residue stretch at 31–196 folds into the SIS domain; it reads VARQFKAGNK…KAGLEAQIAV (166 aa). A substrate-binding site is contributed by 46–48; the sequence is NGG. Residues H55 and E59 each coordinate Zn(2+). Substrate contacts are provided by residues E59, 88 to 89, 114 to 116, S119, and Q166; these read ND and STS. Residues Q166 and H174 each coordinate Zn(2+).

The protein belongs to the SIS family. GmhA subfamily. The cofactor is Zn(2+).

It is found in the cytoplasm. It catalyses the reaction 2 D-sedoheptulose 7-phosphate = D-glycero-alpha-D-manno-heptose 7-phosphate + D-glycero-beta-D-manno-heptose 7-phosphate. It participates in carbohydrate biosynthesis; D-glycero-D-manno-heptose 7-phosphate biosynthesis; D-glycero-alpha-D-manno-heptose 7-phosphate and D-glycero-beta-D-manno-heptose 7-phosphate from sedoheptulose 7-phosphate: step 1/1. In terms of biological role, catalyzes the isomerization of sedoheptulose 7-phosphate in D-glycero-D-manno-heptose 7-phosphate. This is Phosphoheptose isomerase from Crocosphaera subtropica (strain ATCC 51142 / BH68) (Cyanothece sp. (strain ATCC 51142)).